Reading from the N-terminus, the 85-residue chain is Homeobox protein liguleless 3 (85 aa).

Positions 1 to 21 constitute an ELK domain; that stretch reads ELKEMLLKKYSGCLSRLRSEF. A DNA-binding region (homeobox; TALE-type) is located at residues 22–85; sequence LKKRKKGKLP…NQRKRHWKPS (64 aa).

It belongs to the TALE/KNOX homeobox family.

It is found in the nucleus. Functionally, probably binds to the DNA sequence 5'-TGAC-3'. The protein is Homeobox protein liguleless 3 (LG3) of Zea mays (Maize).